The sequence spans 367 residues: Alanine racemase (367 aa).

The active-site Proton acceptor; specific for D-alanine is lysine 40. Lysine 40 bears the N6-(pyridoxal phosphate)lysine mark. Residue arginine 136 coordinates substrate. The active-site Proton acceptor; specific for L-alanine is tyrosine 263. Substrate is bound at residue methionine 310.

It belongs to the alanine racemase family. Requires pyridoxal 5'-phosphate as cofactor.

It catalyses the reaction L-alanine = D-alanine. It functions in the pathway amino-acid biosynthesis; D-alanine biosynthesis; D-alanine from L-alanine: step 1/1. Its function is as follows. Catalyzes the interconversion of L-alanine and D-alanine. May also act on other amino acids. In Streptococcus thermophilus (strain CNRZ 1066), this protein is Alanine racemase (alr).